We begin with the raw amino-acid sequence, 179 residues long: Adenine phosphoribosyltransferase (179 aa).

The protein belongs to the purine/pyrimidine phosphoribosyltransferase family. In terms of assembly, homodimer.

The protein localises to the cytoplasm. The enzyme catalyses AMP + diphosphate = 5-phospho-alpha-D-ribose 1-diphosphate + adenine. It participates in purine metabolism; AMP biosynthesis via salvage pathway; AMP from adenine: step 1/1. Functionally, catalyzes a salvage reaction resulting in the formation of AMP, that is energically less costly than de novo synthesis. The protein is Adenine phosphoribosyltransferase of Bradyrhizobium diazoefficiens (strain JCM 10833 / BCRC 13528 / IAM 13628 / NBRC 14792 / USDA 110).